The primary structure comprises 391 residues: Zinc finger protein DPF3 (391 aa).

Residues 152–165 (ENGDGFHDDEDFEV) show a composition bias toward acidic residues. 2 disordered regions span residues 152–200 (ENGD…PYVC) and 236–266 (LAEEEGEEERETEIPQSPPVHHENHKPQKAP). Residues 169–183 (KRKHRNKGRGRGSGR) are compositionally biased toward basic residues. The C2H2-type zinc-finger motif lies at 198–235 (YVCDNRYKQKHNSKTADSVCGKRYKNRPGLSYHYAHTH). 2 consecutive PHD-type zinc fingers follow at residues 273–333 (NDYC…CKSC) and 330–380 (CKSC…CQNL).

As to quaternary structure, component of the BAF complex. Interacts with acetylated histones H3 and H4. Component of neuron-specific chromatin remodeling complex (nBAF complex), a subfamily of ATP-dependent SWI/SNF chromatin remodeling complexes. Expressed in the heart and somites.

It localises to the nucleus. Muscle-specific component of the BAF complex, a multiprotein complex involved in transcriptional activation and repression of select genes by chromatin remodeling (alteration of DNA-nucleosome topology). Specifically binds acetylated lysines on histone 3 and 4. In the complex, it acts as a tissue-specific anchor between histone acetylations and methylations and chromatin remodeling. Belongs to the neuron-specific chromatin remodeling complex (nBAF complex) and may play a role in neural development. Plays an essential role in heart and skeletal muscle development. The sequence is that of Zinc finger protein DPF3 (dpf3) from Danio rerio (Zebrafish).